A 346-amino-acid polypeptide reads, in one-letter code: Dihydroorotase (346 aa).

Residues H14 and H16 each coordinate Zn(2+). Residues 16 to 18 and N42 each bind substrate; that span reads HLR. 3 residues coordinate Zn(2+): K100, H137, and H175. N6-carboxylysine is present on K100. A substrate-binding site is contributed by H137. L220 lines the substrate pocket. A Zn(2+)-binding site is contributed by D248. The active site involves D248. Residues H252 and A264 each coordinate substrate.

The protein belongs to the metallo-dependent hydrolases superfamily. DHOase family. Class II DHOase subfamily. As to quaternary structure, homodimer. It depends on Zn(2+) as a cofactor.

The enzyme catalyses (S)-dihydroorotate + H2O = N-carbamoyl-L-aspartate + H(+). It functions in the pathway pyrimidine metabolism; UMP biosynthesis via de novo pathway; (S)-dihydroorotate from bicarbonate: step 3/3. Its function is as follows. Catalyzes the reversible cyclization of carbamoyl aspartate to dihydroorotate. The protein is Dihydroorotase of Cereibacter sphaeroides (strain ATCC 17025 / ATH 2.4.3) (Rhodobacter sphaeroides).